A 158-amino-acid chain; its full sequence is D-aminoacyl-tRNA deacylase (158 aa).

The short motif at 144–145 (GP) is the Gly-cisPro motif, important for rejection of L-amino acids element.

Belongs to the DTD family. Homodimer.

The protein localises to the cytoplasm. It catalyses the reaction glycyl-tRNA(Ala) + H2O = tRNA(Ala) + glycine + H(+). It carries out the reaction a D-aminoacyl-tRNA + H2O = a tRNA + a D-alpha-amino acid + H(+). An aminoacyl-tRNA editing enzyme that deacylates mischarged D-aminoacyl-tRNAs. Also deacylates mischarged glycyl-tRNA(Ala), protecting cells against glycine mischarging by AlaRS. Acts via tRNA-based rather than protein-based catalysis; rejects L-amino acids rather than detecting D-amino acids in the active site. By recycling D-aminoacyl-tRNA to D-amino acids and free tRNA molecules, this enzyme counteracts the toxicity associated with the formation of D-aminoacyl-tRNA entities in vivo and helps enforce protein L-homochirality. In Corynebacterium kroppenstedtii (strain DSM 44385 / JCM 11950 / CIP 105744 / CCUG 35717), this protein is D-aminoacyl-tRNA deacylase.